The following is a 1744-amino-acid chain: MSGIAFVEVRTRAGQEDRSAPWRPVVRNGENHATFYDTRMGNFDANPFPPQTCQTCAASLTGKYGNERCHGHFGFVGMPRIRPGSAHSDSDRLVVLNPHLAMDADRLFRAKCFFCHKFRAPTFDVERFRQALVLADHGLPGDALHLLDTVPTAKGHDAMLNHRRMANEEIVNDVSILQSYVDRILRQRASGCSEEDAKARVTMAQKGTVDVRNDICNMAISHLRSFSGPCSHCTAISPTFLKRGGIIFFLFRKSNLVTNIAKGFLTQQEVSEWEAVNRLHGRTGTYFDGRQMLFHMKNLFAKEQAILGLLYPNLGEPSVFTKTNKVVPASERYKLFFLDRILVPPLPLRLSSGVRVNDNGLIIPDEQTRALSDILGFVEQIECFHTLSANSTNGRSFITDAQRAVNESNLRNLQQKVDEFYAEIVNSFAKKEGLFRMNMMGKRVNQACRSVISPDPFVEPNEVLLPRPLARALSFPEQVTCFAPARMNLLKHCVVNGPRKYPGATHIELRHANGEIRSVDLNVPEQTRRQHAARFFAMAQSGVTLIVYRHILNGDRVIFNRQPTLHKPSMMGYRVKVLSGSKTIRFHYVNGNSFNADFDGDEMNVHVPQSIETRAEVETLMDANINYLVPTSGRPIRGLIQDHVAAGVLVTLRDKFFDHSTFVQLVYNGVGPYIQENVGITLAELIPIPAILMPRPMWTGKQLISVMVRFSSGLSAASDCGREIEGGITLKGTSQIQPSAFDRIPAGSCDAVRAKSGAVVDSTVMFANSELITGFMCKKQLGASNMSAPHHVYELYGPHRTGQLFAAFGRVLLLALRKEGLSLAMDDMFLVDEERRCDLLRKLDDIALDVPDEEATAAPMIADYATKIQQEFVPQRMLVPFPKNHLLLMTISGAKGSNLNATQMSLQLGQQLFDGLRVKRMNSSKTLPSFFTNEKRARSFGFAMGSFASGIRPAEYTIHAMAGRDGLIDTAVKTSRSGHLQRCLIKGLESLVVHWDRTVRDSNGSVIQFMYGGDGLDPCKASTLTAWEMMKDNVVDVSKRFGGDASESVAGAEDGAAAGLKEMRNEDGKPTTEAVQNAHMEQQLSTYPLPASLDKSLSEYLCKKADFPLFRKVSTLARWDAKQQLKERLQQRRQKWVGAFEKTLADITARRRLWALCEPGEPVGLLAAQAAGEPSTQMTLNTFHTAGSTVSHVTEGIPRLRELLIYASVNKAAVVVPVTNATEEDEKVIAKMLRAGVAAKLTDCLAKVTDGAGGQSASSSMQRNLNTGFGKGYHYHVARGRTGMVITVSFLFSRSCLEELRKRMCMSPSEHRQSFTEALKNVVRLIMRSLSAVPREKESGDGSGNTGGMKGGSGRADRKRKRSGPDDGGGPLGGTFGDEIMRIEEGTDSDDGMSERSSIGGGRAGSEVSSLHSDGTDTRGIAGSDTGGPQRRRGSVESGRGDDASDSEAADPDLYARRSGSPARDAEDGGEMQDRDGTDWGGTSMQGVVGYDNFPEIHMSFTKSNFGAVIAPLSTAAAARDGVVQLHEDFFIVNAVLRTASDVIAVIPDVVDNALEAQRMPSWLPQFGSLTFTRLKDKGSGQLVFQGPGSTMRNVMSFLSLFTVGIKSIKLHQACSTDIRDMGTYFGIESGYAALYDELNKLFNRYNVDPRHLSLIADTSTHRGRWENFNFTGVISTSASPLFQMTFASSKRWLHRAVSRGMSDDLESFSSAIMVGERPRVGTASVRLSTDTAILRDVLERNFA.

3 residues coordinate Zn(2+): Cys56, Cys69, and His72. Residues Asp597, Asp599, and Asp601 each coordinate Mg(2+). The tract at residues 953-965 is bridging helix; that stretch reads PAEYTIHAMAGRD. Residues 1333–1484 are disordered; sequence VPREKESGDG…RDGTDWGGTS (152 aa). Composition is skewed to gly residues over residues 1341-1354 and 1366-1376; these read DGSG…GGSG and DDGGGPLGGTF. The span at 1464–1478 shows a compositional bias: basic and acidic residues; that stretch reads RDAEDGGEMQDRDGT.

It belongs to the RNA polymerase beta' chain family. In terms of assembly, component of the RNA polymerase I (Pol I) complex consisting of at least 13 subunits. Phosphorylated.

The protein localises to the nucleus. It localises to the nucleolus. The catalysed reaction is RNA(n) + a ribonucleoside 5'-triphosphate = RNA(n+1) + diphosphate. In terms of biological role, DNA-dependent RNA polymerase catalyzes the transcription of DNA into RNA using the four ribonucleoside triphosphates as substrates. Largest and catalytic core component of RNA polymerase I which synthesizes ribosomal RNA precursors. Forms the polymerase active center together with the second largest subunit. A single stranded DNA template strand of the promoter is positioned within the central active site cleft of Pol I. A bridging helix emanates from RPA1 and crosses the cleft near the catalytic site and is thought to promote translocation of Pol I by acting as a ratchet that moves the RNA-DNA hybrid through the active site by switching from straight to bent conformations at each step of nucleotide addition. This chain is DNA-directed RNA polymerase I subunit RPA1 (TRP11), found in Trypanosoma brucei brucei.